The primary structure comprises 58 residues: Photosystem II reaction center protein K (58 aa).

Residues M1 to A21 constitute a propeptide that is removed on maturation. The helical transmembrane segment at I29–F49 threads the bilayer.

It belongs to the PsbK family. In terms of assembly, PSII is composed of 1 copy each of membrane proteins PsbA, PsbB, PsbC, PsbD, PsbE, PsbF, PsbH, PsbI, PsbJ, PsbK, PsbL, PsbM, PsbT, PsbX, PsbY, PsbZ, Psb30/Ycf12, at least 3 peripheral proteins of the oxygen-evolving complex and a large number of cofactors. It forms dimeric complexes.

It localises to the plastid. The protein resides in the chloroplast thylakoid membrane. Functionally, one of the components of the core complex of photosystem II (PSII). PSII is a light-driven water:plastoquinone oxidoreductase that uses light energy to abstract electrons from H(2)O, generating O(2) and a proton gradient subsequently used for ATP formation. It consists of a core antenna complex that captures photons, and an electron transfer chain that converts photonic excitation into a charge separation. The sequence is that of Photosystem II reaction center protein K from Adiantum capillus-veneris (Maidenhair fern).